The following is a 341-amino-acid chain: MWLLEKAGYRVRTAEARALQAHPSLVPKRQARGSPSRCNPNVLTPDRIPQFFIPPRLRDPRGAEGRVDRNPGGRNLPVACSLPHLAGREGWAFLPESPHTRRRESLFHGPRGLAAGLAPAQSRLHVSAPDLRLCRAPDSDTASSPDSSPCGSPHTPRPQSLSPDEASSADTSPYAPRRAPPLFHLDFLCCQLRPTKDSVLRLGPRGGQLRLSTEYQAGPGRLRLRLVSAEGLPRPRTRPGSGGGGCCVILRLQPRVRPGAQRSRVVQSSCNPIFNEDFFFEGLRPPDLAVRSLRAKVLDRGAGLRRDVLLGECETPLIALLPPLAGGLGPGSSLAPTHLSL.

Basic and acidic residues predominate over residues 56–71 (RLRDPRGAEGRVDRNP). 2 disordered regions span residues 56-75 (RLRD…GGRN) and 134-176 (CRAP…PYAP). Residues 139 to 149 (SDTASSPDSSP) are compositionally biased toward low complexity. The region spanning 205–331 (RGGQLRLSTE…PPLAGGLGPG (127 aa)) is the C2 domain.

This Mus musculus (Mouse) protein is C2 calcium-dependent domain-containing protein 4D (C2cd4d).